The sequence spans 592 residues: Frizzled-5 (592 aa).

A signal peptide spans methionine 1–serine 38. The Extracellular portion of the chain corresponds to alanine 39–tryptophan 248. In terms of domain architecture, FZ spans serine 40–arginine 161. 5 disulfides stabilise this stretch: cysteine 45–cysteine 106, cysteine 53–cysteine 99, cysteine 90–cysteine 128, cysteine 117–cysteine 158, and cysteine 121–cysteine 145. The tract at residues asparagine 162 to proline 192 is disordered. Residues isoleucine 249 to isoleucine 269 traverse the membrane as a helical segment. Topologically, residues aspartate 270–proline 280 are cytoplasmic. Residues isoleucine 281 to alanine 301 traverse the membrane as a helical segment. The Extracellular portion of the chain corresponds to glycine 302–cysteine 327. The helical transmembrane segment at threonine 328–leucine 348 threads the bilayer. The Cytoplasmic segment spans residues serine 349 to glutamine 370. The chain crosses the membrane as a helical span at residues tyrosine 371–serine 391. Residues serine 392 to glycine 414 lie on the Extracellular side of the membrane. Residues phenylalanine 415–phenylalanine 435 form a helical membrane-spanning segment. Topologically, residues valine 436–arginine 461 are cytoplasmic. The helical transmembrane segment at isoleucine 462–tyrosine 482 threads the bilayer. At glutamate 483 to alanine 512 the chain is on the extracellular side. The helical transmembrane segment at valine 513–tryptophan 533 threads the bilayer. The Cytoplasmic segment spans residues serine 534–valine 592.

Belongs to the G-protein coupled receptor Fz/Smo family.

Its subcellular location is the cell membrane. It localises to the golgi apparatus membrane. The protein resides in the synapse. The protein localises to the perikaryon. It is found in the cell projection. Its subcellular location is the dendrite. It localises to the axon. Functionally, receptor for Wnt proteins. Following binding, activates the canonical Wnt/beta-catenin signaling pathway. Also activates wnt non-canonical signaling. In neurons, activation of the Wnt pathway promotes formation of synapses. May be involved in transduction and intercellular transmission of polarity information during tissue morphogenesis and/or in differentiated tissues. Plays a role in early eye development, possibly through wnt non-canonical signaling. As a receptor for wnt11, promotes eye formation, at least partially, by antagonizing the Wnt/beta-catenin pathway. In addition, promotes coherence of eye field cells, potentially contributing to the coordinated morphogenetic behaviors of cells in the nascent eye field. The sequence is that of Frizzled-5 (fzd5) from Danio rerio (Zebrafish).